A 291-amino-acid polypeptide reads, in one-letter code: N-acetylmannosamine kinase (291 aa).

ATP contacts are provided by residues 5-12 and 132-139; these read AIDIGGTK and GVGGGVVS. Zn(2+) contacts are provided by H156, C166, C168, and C173.

The protein belongs to the ROK (NagC/XylR) family. NanK subfamily. Homodimer.

It carries out the reaction an N-acyl-D-mannosamine + ATP = an N-acyl-D-mannosamine 6-phosphate + ADP + H(+). It participates in amino-sugar metabolism; N-acetylneuraminate degradation; D-fructose 6-phosphate from N-acetylneuraminate: step 2/5. Its function is as follows. Catalyzes the phosphorylation of N-acetylmannosamine (ManNAc) to ManNAc-6-P. In Escherichia coli (strain 55989 / EAEC), this protein is N-acetylmannosamine kinase.